Reading from the N-terminus, the 235-residue chain is MSFLKSFPPPGSAEGLRQQQPETEAVLNGKGLGTGTLYIAESRLSWLDGSGLGFSLEYPTISLHAVSRDLNAYPREHLYVMVNAKFGEESKESVAEEEDSDDDVEPIAEFRFVPSDKSALEAMFTAMCECQALHPDPEDEDSDDYDGEEYDVEAHEQGQGDIPTFYTYEEGLSHLTAEGQATLERLEGMLSQSVSSQYNMAGVRTEDSTRDYEDGMEVDTTPTVAGQFEDADVDH.

Positions 1–21 are disordered; it reads MSFLKSFPPPGSAEGLRQQQP. Ser2 is modified (N-acetylserine). Ser100, Ser142, Ser191, Ser193, Ser196, and Ser208 each carry phosphoserine. The segment at 133-157 is disordered; that stretch reads LHPDPEDEDSDDYDGEEYDVEAHEQ. Residues 137 to 151 show a composition bias toward acidic residues; sequence PEDEDSDDYDGEEYD. The disordered stretch occupies residues 195 to 217; the sequence is SSQYNMAGVRTEDSTRDYEDGME. Residues 204–213 show a composition bias toward basic and acidic residues; it reads RTEDSTRDYE. Thr221 bears the Phosphothreonine mark.

It belongs to the pICln (TC 1.A.47) family. As to quaternary structure, component of the methylosome, a 20S complex containing at least PRMT5/SKB1, WDR77/MEP50 and CLNS1A/pICln. May mediate SNRPD1 and SNRPD3 methylation. Forms a 6S pICln-Sm complex composed of CLNS1A/pICln, SNRPD1, SNRPD2, SNRPE, SNRPF and SNRPG; ring-like structure where CLNS1A/pICln mimics additional Sm proteins and which is unable to assemble into the core snRNP. Interacts with LSM10 and LSM11.

The protein resides in the cytoplasm. It is found in the cytosol. Its subcellular location is the nucleus. The protein localises to the cytoskeleton. Involved in both the assembly of spliceosomal snRNPs and the methylation of Sm proteins. Chaperone that regulates the assembly of spliceosomal U1, U2, U4 and U5 small nuclear ribonucleoproteins (snRNPs), the building blocks of the spliceosome, and thereby plays an important role in the splicing of cellular pre-mRNAs. Most spliceosomal snRNPs contain a common set of Sm proteins SNRPB, SNRPD1, SNRPD2, SNRPD3, SNRPE, SNRPF and SNRPG that assemble in a heptameric protein ring on the Sm site of the small nuclear RNA to form the core snRNP (Sm core). In the cytosol, the Sm proteins SNRPD1, SNRPD2, SNRPE, SNRPF and SNRPG are trapped in an inactive 6S pICln-Sm complex by the chaperone CLNS1A that controls the assembly of the core snRNP. Dissociation by the SMN complex of CLNS1A from the trapped Sm proteins and their transfer to an SMN-Sm complex triggers the assembly of core snRNPs and their transport to the nucleus. The polypeptide is Methylosome subunit pICln (CLNS1A) (Canis lupus familiaris (Dog)).